The sequence spans 176 residues: Large ribosomal subunit protein uL10 (176 aa).

This sequence belongs to the universal ribosomal protein uL10 family. Part of the ribosomal stalk of the 50S ribosomal subunit. The N-terminus interacts with L11 and the large rRNA to form the base of the stalk. The C-terminus forms an elongated spine to which L12 dimers bind in a sequential fashion forming a multimeric L10(L12)X complex.

In terms of biological role, forms part of the ribosomal stalk, playing a central role in the interaction of the ribosome with GTP-bound translation factors. This is Large ribosomal subunit protein uL10 from Acaryochloris marina (strain MBIC 11017).